The following is a 100-amino-acid chain: Enhancer of yellow 2 transcription factor (100 aa).

This sequence belongs to the ENY2 family. As to quaternary structure, component of the nuclear pore complex (NPC)-associated AMEX complex (anchoring and mRNA export complex), composed of at least e(y)2 and xmas-2. Component of the SAGA transcription coactivator-HAT complexes, at least composed of Ada2b, e(y)2, Pcaf/Gcn5, Taf10 and Nipped-A/Trrap. Within the SAGA complex, e(y)2, Sgf11, and not/nonstop form an additional subcomplex of SAGA called the DUB module (deubiquitination module). Component of the THO complex, composed of at least e(y)2, HPR1, THO2, THOC5, THOC6 and THOC7. Interacts with e(y)1. Interacts with su(Hw) (via zinc fingers). Interacts with xmas-2; required for localization to the nuclear periphery. Interacts with the nuclear pore complex (NPC).

It localises to the nucleus. It is found in the nucleoplasm. Its subcellular location is the cytoplasm. Involved in mRNA export coupled transcription activation by association with both the AMEX and the SAGA complexes. The SAGA complex is a multiprotein complex that activates transcription by remodeling chromatin and mediating histone acetylation and deubiquitination. Within the SAGA complex, participates in a subcomplex that specifically deubiquitinates histone H2B. The SAGA complex is recruited to specific gene promoters by activators, where it is required for transcription. Required for nuclear receptor-mediated transactivation. Involved in transcription elongation by recruiting the THO complex onto nascent mRNA. The AMEX complex functions in docking export-competent ribonucleoprotein particles (mRNPs) to the nuclear entrance of the nuclear pore complex (nuclear basket). AMEX participates in mRNA export and accurate chromatin positioning in the nucleus by tethering genes to the nuclear periphery. In Drosophila ananassae (Fruit fly), this protein is Enhancer of yellow 2 transcription factor.